A 145-amino-acid polypeptide reads, in one-letter code: Aminoglycoside N(6')-acetyltransferase type 1 (145 aa).

Residues 1 to 145 (MDIRQMNRTH…ERVIFYRKRC (145 aa)) enclose the N-acetyltransferase domain. Residues Trp22, His25, Tyr66, and Glu79 each coordinate substrate. Residues 81–83 (IFV) and 89–94 (QRGVAK) each bind acetyl-CoA. Substrate is bound at residue Asp115. An acetyl-CoA-binding site is contributed by Asn120. Glu136 lines the substrate pocket.

Homodimer.

It catalyses the reaction kanamycin B + acetyl-CoA = N(6')-acetylkanamycin B + CoA + H(+). In terms of biological role, catalyzes the transfer of an acetyl group from acetyl-CoA to the 6'-amino group of aminoglycoside molecules conferring resistance to antibiotics containing the purpurosamine ring. This Salmonella typhimurium (strain LT2 / SGSC1412 / ATCC 700720) protein is Aminoglycoside N(6')-acetyltransferase type 1.